An 869-amino-acid polypeptide reads, in one-letter code: DNA mismatch repair protein MutS (869 aa).

624–631 serves as a coordination point for ATP; sequence GPNMGGKS.

The protein belongs to the DNA mismatch repair MutS family.

Its function is as follows. This protein is involved in the repair of mismatches in DNA. It is possible that it carries out the mismatch recognition step. This protein has a weak ATPase activity. The polypeptide is DNA mismatch repair protein MutS (Solibacter usitatus (strain Ellin6076)).